The following is a 524-amino-acid chain: Fusicoccadiene C-8 hydroxylase (524 aa).

A helical transmembrane segment spans residues 16-36 (LQLLCIGPLVYACVSFIIKIV). 2 N-linked (GlcNAc...) asparagine glycosylation sites follow: asparagine 126 and asparagine 344. Residue cysteine 465 coordinates heme. N-linked (GlcNAc...) asparagine glycosylation occurs at asparagine 496.

Belongs to the cytochrome P450 family. Requires heme as cofactor.

It localises to the membrane. It functions in the pathway mycotoxin biosynthesis. In terms of biological role, cytochrome P450 monooxygenase; part of the 2 gene clusters that mediate the biosynthesis of fusicoccins, diterpene glucosides that display phytohormone-like activity and function as potent activators of plasma membrane H(+)-ATPases in plants by modifying 14-3-3 proteins and cause the plant disease constriction canker. The first step in the pathway is performed by the fusicoccadiene synthase PaFS that possesses both prenyl transferase and terpene cyclase activity, converting isopentenyl diphosphate and dimethylallyl diphosphate into geranylgeranyl diphosphate (GGDP) and successively converting GGDP into fusicocca-2,10(14)-diene, a precursor for fusicoccin H. The second step is the oxidation at the C-8 position by the cytochrome P450 monooxygenase PaP450-2 to yield fusicocca-2,10(14)-diene-8-beta-ol. The cytochrome P450 monooxygenase PaP450-1 then catalyzes the hydroxylation at the C-16 position to produce fusicocca-2,10(14)-diene-8-beta,16-diol. The dioxygenase fc-dox then catalyzes the 16-oxydation of fusicocca-2,10(14)-diene-8-beta,16-diol to yield an aldehyde (8-beta-hydroxyfusicocca-1,10(14)-dien-16-al). The short-chain dehydrogenase/reductase fc-sdr catalyzes the reduction of the aldehyde to yield fusicocca-1,10(14)-diene-8-beta,16-diol. The next step is the hydroxylation at C-9 performed by the cytochrome P450 monooxygenase PaP450-3 that leads to fusicoccin H aglycon which is glycosylated to fusicoccin H by the O-glycosyltransferase PaGT. Hydroxylation at C-12 by the cytochrome P450 monooxygenase PaP450-4 leads then to the production of fusicoccin Q and is followed by methylation by the O-methyltransferase PaMT to yield fusicoccin P. Fusicoccin P is further converted to fusicoccin J via prenylation by the O-glucose prenyltransferase PaPT. Cytochrome P450 monooxygenase PaP450-5 then performs hydroxylation at C-19 to yield dideacetyl-fusicoccin A which is acetylated to 3'-O-deacetyl-fusicoccin A by the O-acetyltransferase PaAT-2. Finally, a another acetylation by the O-acetyltransferase PaAT-1 yields fusicoccin A. The protein is Fusicoccadiene C-8 hydroxylase of Phomopsis amygdali (Fusicoccum amygdali).